The following is a 188-amino-acid chain: NAD(P)H-quinone oxidoreductase subunit J (188 aa).

Residues 1 to 12 (MSETPSKQTAAS) are compositionally biased toward polar residues. The interval 1-23 (MSETPSKQTAASDETGAVVAPEP) is disordered.

This sequence belongs to the complex I 30 kDa subunit family. NDH-1 can be composed of about 15 different subunits; different subcomplexes with different compositions have been identified which probably have different functions.

The protein resides in the cellular thylakoid membrane. The catalysed reaction is a plastoquinone + NADH + (n+1) H(+)(in) = a plastoquinol + NAD(+) + n H(+)(out). It catalyses the reaction a plastoquinone + NADPH + (n+1) H(+)(in) = a plastoquinol + NADP(+) + n H(+)(out). Its function is as follows. NDH-1 shuttles electrons from an unknown electron donor, via FMN and iron-sulfur (Fe-S) centers, to quinones in the respiratory and/or the photosynthetic chain. The immediate electron acceptor for the enzyme in this species is believed to be plastoquinone. Couples the redox reaction to proton translocation, and thus conserves the redox energy in a proton gradient. Cyanobacterial NDH-1 also plays a role in inorganic carbon-concentration. In Synechococcus sp. (strain CC9605), this protein is NAD(P)H-quinone oxidoreductase subunit J.